The primary structure comprises 134 residues: Arsenate reductase (134 aa).

Catalysis depends on nucleophile residues Cys-11, Cys-83, and Cys-90. 2 cysteine pairs are disulfide-bonded: Cys-11–Cys-83 and Cys-83–Cys-90.

It belongs to the low molecular weight phosphotyrosine protein phosphatase family. Thioredoxin-coupled ArsC subfamily.

It localises to the cytoplasm. The catalysed reaction is arsenate + [thioredoxin]-dithiol + H(+) = arsenite + [thioredoxin]-disulfide + H2O. Its function is as follows. Catalyzes the reduction of arsenate [As(V)] to arsenite [As(III)]. The protein is Arsenate reductase of Bacillus cereus (strain 03BB102).